A 296-amino-acid polypeptide reads, in one-letter code: Probable endonuclease 4 (296 aa).

Zn(2+)-binding residues include His69, His109, Glu160, Asp194, His197, His231, Asp244, His246, and Glu276.

It belongs to the AP endonuclease 2 family. Requires Zn(2+) as cofactor.

The enzyme catalyses Endonucleolytic cleavage to 5'-phosphooligonucleotide end-products.. Endonuclease IV plays a role in DNA repair. It cleaves phosphodiester bonds at apurinic or apyrimidinic (AP) sites, generating a 3'-hydroxyl group and a 5'-terminal sugar phosphate. This chain is Probable endonuclease 4, found in Sulfurovum sp. (strain NBC37-1).